The primary structure comprises 43 residues: Hainantoxin F5-22.36 (43 aa).

Disulfide bonds link cysteine 1–cysteine 19, cysteine 8–cysteine 24, and cysteine 18–cysteine 38.

Belongs to the neurotoxin 14 (magi-1) family. 02 (HWTX-XVIc) subfamily. In terms of tissue distribution, expressed by the venom gland.

The protein resides in the secreted. Functionally, probable ion channel inhibitor. The protein is Hainantoxin F5-22.36 of Cyriopagopus hainanus (Chinese bird spider).